We begin with the raw amino-acid sequence, 100 residues long: uncharacterized protein (100 aa).

Residues 62–82 traverse the membrane as a helical segment; that stretch reads IPIVIIVSIFILLIIGSISLY.

The protein resides in the membrane. This is an uncharacterized protein from Dictyostelium discoideum (Social amoeba).